Reading from the N-terminus, the 82-residue chain is Sec-independent protein translocase protein TatA (82 aa).

A helical membrane pass occupies residues 1–21; sequence MGGISIWQLLIIAVIVVLLFG.

This sequence belongs to the TatA/E family. As to quaternary structure, the Tat system comprises two distinct complexes: a TatABC complex, containing multiple copies of TatA, TatB and TatC subunits, and a separate TatA complex, containing only TatA subunits. Substrates initially bind to the TatABC complex, which probably triggers association of the separate TatA complex to form the active translocon.

It localises to the cell inner membrane. Its function is as follows. Part of the twin-arginine translocation (Tat) system that transports large folded proteins containing a characteristic twin-arginine motif in their signal peptide across membranes. TatA could form the protein-conducting channel of the Tat system. The chain is Sec-independent protein translocase protein TatA from Vibrio cholerae serotype O1 (strain ATCC 39315 / El Tor Inaba N16961).